Here is a 378-residue protein sequence, read N- to C-terminus: Galanin receptor 2b (378 aa).

Topologically, residues 1–30 are extracellular; it reads MSDHEDLNKAMGHWNASESYQLNPASVIVS. Residues 31 to 51 form a helical membrane-spanning segment; it reads VVFSLIFLLGTIGNSLVLAVL. Over 52-62 the chain is Cytoplasmic; the sequence is LRSGQVGYNTT. The chain crosses the membrane as a helical span at residues 63–83; it reads NLFILNLSVADFFFIIFCVPF. Topologically, residues 84 to 101 are extracellular; sequence QATIYSLEGWVFGSFMCK. Cysteine 100 and cysteine 177 are oxidised to a cystine. Residues 102–123 traverse the membrane as a helical segment; sequence VVHFFINLTMYASSFTLAAVSV. Topologically, residues 124–143 are cytoplasmic; it reads DRYLAIRYPLRSRELRTPCN. Residues 144–164 traverse the membrane as a helical segment; sequence AVVAMVVIWGLSLVFAGPYLS. Residues 165–187 are Extracellular-facing; sequence YYDLIDFENSNVCVPGWEEHNRK. The chain crosses the membrane as a helical span at residues 188 to 208; that stretch reads VLDTCTFVFGYVIPVLIVSLS. Residues 209 to 238 lie on the Cytoplasmic side of the membrane; it reads YTRTIKYLWTAVDPLDGMSESKRAKRKVTK. A helical membrane pass occupies residues 239–259; that stretch reads MIIIVTVLFCICWLPYHVVIL. The Extracellular portion of the chain corresponds to 260-276; it reads CYLYGDFPFNQTTYAFR. Residues 277–297 form a helical membrane-spanning segment; the sequence is LLSHCMAYANSCLNPIVYALV. The Cytoplasmic portion of the chain corresponds to 298–378; it reads SKHFRKGFKK…TITLPFQNQP (81 aa). The disordered stretch occupies residues 339-362; sequence EVSQMNEENARQNESEMVNRPLAQ.

The protein belongs to the G-protein coupled receptor 1 family. As to expression, expressed in neurons in the ventral area of the interpeduncular nucleus (IPN) where expression often overlaps with spx1.

The protein resides in the membrane. Receptor for the hormone galanin. Receptor for the hormones spexin-1 and spexin-2. The sequence is that of Galanin receptor 2b from Danio rerio (Zebrafish).